Consider the following 264-residue polypeptide: Hydroxyethylthiazole kinase (264 aa).

Methionine 40 serves as a coordination point for substrate. Residues lysine 116 and threonine 161 each coordinate ATP. Glycine 188 is a substrate binding site.

This sequence belongs to the Thz kinase family. Requires Mg(2+) as cofactor.

The catalysed reaction is 5-(2-hydroxyethyl)-4-methylthiazole + ATP = 4-methyl-5-(2-phosphooxyethyl)-thiazole + ADP + H(+). It functions in the pathway cofactor biosynthesis; thiamine diphosphate biosynthesis; 4-methyl-5-(2-phosphoethyl)-thiazole from 5-(2-hydroxyethyl)-4-methylthiazole: step 1/1. Catalyzes the phosphorylation of the hydroxyl group of 4-methyl-5-beta-hydroxyethylthiazole (THZ). The protein is Hydroxyethylthiazole kinase of Staphylococcus carnosus (strain TM300).